The sequence spans 382 residues: Enoyl-[acyl-carrier-protein] reductase, mitochondrial (382 aa).

The transit peptide at 1 to 17 (MSSFLSKRFLSFSQRAM) directs the protein to the mitochondrion. Y77 functions as the Proton donor in the catalytic mechanism. Residues N159, 187-190 (TSSV), 210-212 (RDR), 285-288 (YGGM), 310-312 (FWV), and K375 contribute to the NADP(+) site.

The protein belongs to the zinc-containing alcohol dehydrogenase family. Quinone oxidoreductase subfamily. As to quaternary structure, homodimer.

The protein resides in the mitochondrion matrix. The catalysed reaction is a 2,3-saturated acyl-[ACP] + NADP(+) = a (2E)-enoyl-[ACP] + NADPH + H(+). Its function is as follows. Catalyzes the NADPH-dependent reduction of trans-2-enoyl thioesters in mitochondrial fatty acid synthesis (fatty acid synthesis type II). Fatty acid chain elongation in mitochondria uses acyl carrier protein (ACP) as an acyl group carrier, but the enzyme accepts both ACP and CoA thioesters as substrates in vitro. Required for respiration and the maintenance of the mitochondrial compartment. This chain is Enoyl-[acyl-carrier-protein] reductase, mitochondrial (ETR1), found in Kluyveromyces lactis (strain ATCC 8585 / CBS 2359 / DSM 70799 / NBRC 1267 / NRRL Y-1140 / WM37) (Yeast).